A 238-amino-acid chain; its full sequence is Ribitol-5-phosphate cytidylyltransferase 2 (238 aa).

Residues 7–10 (LAGG) and 81–87 (GTDRNET) each bind CTP.

This sequence belongs to the IspD/TarI cytidylyltransferase family. TarI subfamily.

It catalyses the reaction D-ribitol 5-phosphate + CTP + H(+) = CDP-L-ribitol + diphosphate. Its pathway is cell wall biogenesis; poly(ribitol phosphate) teichoic acid biosynthesis. Functionally, catalyzes the transfer of the cytidylyl group of CTP to D-ribitol 5-phosphate. The polypeptide is Ribitol-5-phosphate cytidylyltransferase 2 (Staphylococcus aureus (strain MSSA476)).